Reading from the N-terminus, the 343-residue chain is Phospholipid phosphatase-related protein type 2 (343 aa).

Transmembrane regions (helical) follow at residues 12-32 (FSII…VILL), 69-89 (VPPA…ILLG), and 129-149 (FLGV…AGQV). N-linked (GlcNAc...) asparagine glycosylation is present at Asn165. 3 helical membrane passes run 210 to 230 (AALC…VFRV), 239 to 259 (SLCL…VAEY), and 266 to 286 (VLAG…CVVH). The disordered stretch occupies residues 290-343 (SRPPSGRRLSPWEDLGQAPTMDSPLEKNPRSAGRIRHRHGSPHPSRRTAPAVAT). Ser299 and Ser312 each carry phosphoserine. The span at 322 to 335 (GRIRHRHGSPHPSR) shows a compositional bias: basic residues.

It belongs to the PA-phosphatase related phosphoesterase family.

It is found in the membrane. The protein is Phospholipid phosphatase-related protein type 2 of Homo sapiens (Human).